The sequence spans 776 residues: DNA ligase (776 aa).

Residues 31-35, 80-81, and Glu-112 contribute to the NAD(+) site; these read DAEYD and SL. Catalysis depends on Lys-114, which acts as the N6-AMP-lysine intermediate. 4 residues coordinate NAD(+): Arg-135, Glu-172, Lys-288, and Lys-312. Zn(2+) is bound by residues Cys-406, Cys-409, Cys-436, and Cys-442. Residues 693 to 776 form the BRCT domain; it reads AEGLPLAGQT…TFLAEQGIAV (84 aa).

The protein belongs to the NAD-dependent DNA ligase family. LigA subfamily. Mg(2+) serves as cofactor. Requires Mn(2+) as cofactor.

It catalyses the reaction NAD(+) + (deoxyribonucleotide)n-3'-hydroxyl + 5'-phospho-(deoxyribonucleotide)m = (deoxyribonucleotide)n+m + AMP + beta-nicotinamide D-nucleotide.. In terms of biological role, DNA ligase that catalyzes the formation of phosphodiester linkages between 5'-phosphoryl and 3'-hydroxyl groups in double-stranded DNA using NAD as a coenzyme and as the energy source for the reaction. It is essential for DNA replication and repair of damaged DNA. This Pseudomonas putida (strain ATCC 47054 / DSM 6125 / CFBP 8728 / NCIMB 11950 / KT2440) protein is DNA ligase.